A 164-amino-acid chain; its full sequence is Endoribonuclease YbeY (164 aa).

Zn(2+)-binding residues include H124, H128, and H134.

It belongs to the endoribonuclease YbeY family. It depends on Zn(2+) as a cofactor.

The protein localises to the cytoplasm. Functionally, single strand-specific metallo-endoribonuclease involved in late-stage 70S ribosome quality control and in maturation of the 3' terminus of the 16S rRNA. The sequence is that of Endoribonuclease YbeY from Nitrosomonas europaea (strain ATCC 19718 / CIP 103999 / KCTC 2705 / NBRC 14298).